The sequence spans 407 residues: Putative replication protein A (407 aa).

This sequence belongs to the ParA family.

In Sinorhizobium fredii (strain NBRC 101917 / NGR234), this protein is Putative replication protein A.